The sequence spans 547 residues: CTP synthase (547 aa).

The amidoligase domain stretch occupies residues 1 to 265 (MARFIFITGG…DQAVLDAFGI (265 aa)). Residue serine 13 coordinates CTP. Residue serine 13 participates in UTP binding. Residues 14–19 (SLGKGL) and aspartate 71 contribute to the ATP site. Mg(2+)-binding residues include aspartate 71 and glutamate 139. CTP is bound by residues 146–148 (DIE), 186–191 (KTKPTQ), and lysine 222. UTP is bound by residues 186–191 (KTKPTQ) and lysine 222. Residues 291–546 (KVAIVGKYTQ…VRAAKENSRL (256 aa)) form the Glutamine amidotransferase type-1 domain. Residue glycine 353 coordinates L-glutamine. Cysteine 380 serves as the catalytic Nucleophile; for glutamine hydrolysis. L-glutamine is bound by residues 381 to 384 (LGMQ), glutamate 404, and arginine 474. Active-site residues include histidine 519 and glutamate 521.

It belongs to the CTP synthase family. As to quaternary structure, homotetramer.

The catalysed reaction is UTP + L-glutamine + ATP + H2O = CTP + L-glutamate + ADP + phosphate + 2 H(+). It catalyses the reaction L-glutamine + H2O = L-glutamate + NH4(+). The enzyme catalyses UTP + NH4(+) + ATP = CTP + ADP + phosphate + 2 H(+). It functions in the pathway pyrimidine metabolism; CTP biosynthesis via de novo pathway; CTP from UDP: step 2/2. Its activity is regulated as follows. Allosterically activated by GTP, when glutamine is the substrate; GTP has no effect on the reaction when ammonia is the substrate. The allosteric effector GTP functions by stabilizing the protein conformation that binds the tetrahedral intermediate(s) formed during glutamine hydrolysis. Inhibited by the product CTP, via allosteric rather than competitive inhibition. Catalyzes the ATP-dependent amination of UTP to CTP with either L-glutamine or ammonia as the source of nitrogen. Regulates intracellular CTP levels through interactions with the four ribonucleotide triphosphates. This is CTP synthase from Jannaschia sp. (strain CCS1).